The sequence spans 306 residues: Pseudouridine-5'-phosphate glycosidase (306 aa).

Residue E27 is the Proton donor of the active site. The substrate site is built by K88 and V108. Residue D140 participates in Mn(2+) binding. 142 to 144 (SAD) serves as a coordination point for substrate. K161 functions as the Nucleophile in the catalytic mechanism.

Belongs to the pseudouridine-5'-phosphate glycosidase family. In terms of assembly, homotrimer. Requires Mn(2+) as cofactor.

It catalyses the reaction D-ribose 5-phosphate + uracil = psi-UMP + H2O. Functionally, catalyzes the reversible cleavage of pseudouridine 5'-phosphate (PsiMP) to ribose 5-phosphate and uracil. Functions biologically in the cleavage direction, as part of a pseudouridine degradation pathway. This is Pseudouridine-5'-phosphate glycosidase from Petrotoga mobilis (strain DSM 10674 / SJ95).